Here is a 131-residue protein sequence, read N- to C-terminus: Maturin (131 aa).

At tyrosine 34 the chain carries Phosphotyrosine. Positions 107 to 120 (FEEYSADVEEEEPE) are enriched in acidic residues. Positions 107 to 131 (FEEYSADVEEEEPEADHPQMGVSQQ) are disordered.

It belongs to the MTURN family. Post-translationally, phosphorylation at Tyr-34 is essential for its ability to promote megakaryocyte differentiation.

The protein resides in the cytoplasm. Its function is as follows. Promotes megakaryocyte differentiation by enhancing ERK and JNK signaling as well as up-regulating RUNX1 and FLI1 expression. Represses NF-kappa-B transcriptional activity by inhibiting phosphorylation of RELA at 'Ser- 536'. May be involved in early neuronal development. The polypeptide is Maturin (MTURN) (Bos taurus (Bovine)).